An 89-amino-acid chain; its full sequence is Small ribosomal subunit protein uS14 (89 aa).

This sequence belongs to the universal ribosomal protein uS14 family. As to quaternary structure, part of the 30S ribosomal subunit. Contacts proteins S3 and S10.

In terms of biological role, binds 16S rRNA, required for the assembly of 30S particles and may also be responsible for determining the conformation of the 16S rRNA at the A site. This Streptococcus pneumoniae serotype 2 (strain D39 / NCTC 7466) protein is Small ribosomal subunit protein uS14.